The primary structure comprises 233 residues: Flagellar calcium-binding protein TB-17 (233 aa).

The segment covering 1–11 (MGCSGSKNASN) has biased composition (polar residues). Residues 1-29 (MGCSGSKNASNPKDGAASKGGKDGKTTAD) are disordered. Basic and acidic residues predominate over residues 20–29 (GGKDGKTTAD). EF-hand domains follow at residues 48–83 (ESKS…ILKL), 130–165 (YDIF…LKEW), and 167–202 (VDIT…KKLQ). Asp61, Asn63, Thr65, Lys67, Glu72, Asp143, Asp145, Ser147, Glu154, Asp180, Asn182, Ser184, and Glu191 together coordinate Ca(2+). The tract at residues 203–233 (VSGDPDDEENGANEGDGANAGDGVPAAEGSA) is disordered. The segment covering 214 to 225 (ANEGDGANAGDG) has biased composition (low complexity).

It belongs to the calflagin family.

It is found in the cell projection. The protein resides in the cilium. It localises to the flagellum. May contribute to the rapid motility of the trypanosomes, playing a role either in flagellar structure or in calcium metabolism. Could alternate between a GDP-bound inactive form to a calcium/GTP-bound active form. This is Flagellar calcium-binding protein TB-17 (FCABP) from Trypanosoma brucei brucei.